The chain runs to 81 residues: MQPLGIIAIAALVVAIILAIVVWTIVFIEYRRIKKQRRIDCLLDRITERAEDSGNESEGDREKLSKLVEMGHHAPWDIDDL.

Over M1–I7 the chain is Extracellular. The chain crosses the membrane as a helical span at residues A8–I28. Over E29–L81 the chain is Cytoplasmic. A phosphoserine; by host CK2 mark is found at S53 and S57.

Belongs to the HIV-1 VPU protein family. In terms of assembly, homopentamer. Interacts with host CD4 and BRTC; these interactions induce proteasomal degradation of CD4. Interacts with host BST2; this interaction leads to the degradation of host BST2. Interacts with host FBXW11. Interacts with host AP1M1; this interaction plays a role in the mistrafficking and subsequent degradation of host BST2. Interacts with host RANBP2; this interaction allows Vpu to down-regulate host BLM sumoylation. Post-translationally, phosphorylated by host CK2. This phosphorylation is necessary for interaction with human BTRC and degradation of CD4.

The protein localises to the host membrane. With respect to regulation, ion channel activity is inhibited by hexamethylene amiloride in vitro. Enhances virion budding by targeting host CD4 and Tetherin/BST2 to proteasome degradation. Degradation of CD4 prevents any unwanted premature interactions between viral Env and its host receptor CD4 in the endoplasmic reticulum. Degradation of antiretroviral protein Tetherin/BST2 is important for virion budding, as BST2 tethers new viral particles to the host cell membrane. Mechanistically, Vpu bridges either CD4 or BST2 to BTRC, a substrate recognition subunit of the Skp1/Cullin/F-box protein E3 ubiquitin ligase, induces their ubiquitination and subsequent proteasomal degradation. The alteration of the E3 ligase specificity by Vpu seems to promote the degradation of host IKBKB, leading to NF-kappa-B down-regulation and subsequent apoptosis. Acts as a viroporin that forms an oligomeric ion channel in membranes. Modulates the host DNA repair mechanisms to promote degradation of nuclear viral cDNA in cells that are already productively infected in order to suppress immune sensing and proviral hyper-integration (superinfection). Manipulates PML-NBs and modulates SUMOylation of host BLM protein thereby enhancing its DNA-end processing activity toward viral unintegrated linear DNA. Also inhibits RAD52-mediated homologous repair of viral cDNA, preventing the generation of dead-end circular forms of single copies of the long terminal repeat and permitting sustained nucleolytic attack. The polypeptide is Protein Vpu (Human immunodeficiency virus type 1 group M subtype D (isolate ELI) (HIV-1)).